Consider the following 107-residue polypeptide: Protein RnfH (107 aa).

Residues 82–107 (ARRKRAEKAKEEGRANKVTGGRPIER) form a disordered region.

Belongs to the UPF0125 (RnfH) family.

The protein is Protein RnfH of Pseudoalteromonas translucida (strain TAC 125).